The following is a 794-amino-acid chain: Protein SEY1 (794 aa).

Residues 1–687 (MMEVIDSVLG…KRSIIKTTTA (687 aa)) are Cytoplasmic-facing. In terms of domain architecture, GB1/RHD3-type G spans 43-272 (GLDYHVISVF…ANPYYFKPQY (230 aa)). Residue 53-60 (GSQSSGKS) coordinates GTP. Positions 331-352 (VDHILDDREKLGEVLKNLKQEC) form a coiled coil. A helical transmembrane segment spans residues 688–708 (IPIWMYLLVVALGWNEFVMVL). Residues 709-711 (RNP) are Lumenal-facing. Residues 712 to 732 (LLVTLVLLFGVGFIFVNKFGL) form a helical membrane-spanning segment. At 733–794 (WGPVLNVAHN…SDNEKIEKSE (62 aa)) the chain is on the cytoplasmic side. Residues 770 to 794 (NSAGKESYEMKDMSDSDNEKIEKSE) form a disordered region. Residues 775–794 (ESYEMKDMSDSDNEKIEKSE) are compositionally biased toward basic and acidic residues.

It belongs to the TRAFAC class dynamin-like GTPase superfamily. GB1/RHD3 GTPase family. RHD3 subfamily.

It localises to the endoplasmic reticulum membrane. Functionally, cooperates with the reticulon proteins and tubule-shaping DP1 family proteins to generate and maintain the structure of the tubular endoplasmic reticulum network. Has GTPase activity, which is required for its function in ER organization. This is Protein SEY1 from Zygosaccharomyces rouxii (strain ATCC 2623 / CBS 732 / NBRC 1130 / NCYC 568 / NRRL Y-229).